The sequence spans 229 residues: Heptaprenylglyceryl phosphate synthase (229 aa).

Lysine 12 is a binding site for sn-glycerol 1-phosphate. Mg(2+)-binding residues include aspartate 14 and serine 40. Sn-glycerol 1-phosphate is bound by residues 159-164, glycine 189, and 209-210; these read YLEYSG and GN.

Belongs to the GGGP/HepGP synthase family. Group I subfamily. As to quaternary structure, homodimer. Mg(2+) serves as cofactor.

The catalysed reaction is sn-glycerol 1-phosphate + all-trans-heptaprenyl diphosphate = 3-heptaprenyl-sn-glycero-1-phosphate + diphosphate. It participates in membrane lipid metabolism; glycerophospholipid metabolism. In terms of biological role, prenyltransferase that catalyzes in vivo the transfer of the heptaprenyl moiety of heptaprenyl pyrophosphate (HepPP; 35 carbon atoms) to the C3 hydroxyl of sn-glycerol-1-phosphate (G1P), producing heptaprenylglyceryl phosphate (HepGP). This reaction is an ether-bond-formation step in the biosynthesis of archaea-type G1P-based membrane lipids found in Bacillales. This chain is Heptaprenylglyceryl phosphate synthase, found in Bacillus velezensis (strain DSM 23117 / BGSC 10A6 / LMG 26770 / FZB42) (Bacillus amyloliquefaciens subsp. plantarum).